A 210-amino-acid chain; its full sequence is Thiamine-phosphate synthase (210 aa).

4-amino-2-methyl-5-(diphosphooxymethyl)pyrimidine contacts are provided by residues 39–43 (QLREK) and asparagine 71. Mg(2+) contacts are provided by aspartate 72 and aspartate 91. Serine 110 lines the 4-amino-2-methyl-5-(diphosphooxymethyl)pyrimidine pocket. 134–136 (TPT) is a binding site for 2-[(2R,5Z)-2-carboxy-4-methylthiazol-5(2H)-ylidene]ethyl phosphate. Lysine 137 provides a ligand contact to 4-amino-2-methyl-5-(diphosphooxymethyl)pyrimidine. Glycine 163 provides a ligand contact to 2-[(2R,5Z)-2-carboxy-4-methylthiazol-5(2H)-ylidene]ethyl phosphate.

The protein belongs to the thiamine-phosphate synthase family. It depends on Mg(2+) as a cofactor.

The enzyme catalyses 2-[(2R,5Z)-2-carboxy-4-methylthiazol-5(2H)-ylidene]ethyl phosphate + 4-amino-2-methyl-5-(diphosphooxymethyl)pyrimidine + 2 H(+) = thiamine phosphate + CO2 + diphosphate. It catalyses the reaction 2-(2-carboxy-4-methylthiazol-5-yl)ethyl phosphate + 4-amino-2-methyl-5-(diphosphooxymethyl)pyrimidine + 2 H(+) = thiamine phosphate + CO2 + diphosphate. The catalysed reaction is 4-methyl-5-(2-phosphooxyethyl)-thiazole + 4-amino-2-methyl-5-(diphosphooxymethyl)pyrimidine + H(+) = thiamine phosphate + diphosphate. It functions in the pathway cofactor biosynthesis; thiamine diphosphate biosynthesis; thiamine phosphate from 4-amino-2-methyl-5-diphosphomethylpyrimidine and 4-methyl-5-(2-phosphoethyl)-thiazole: step 1/1. Condenses 4-methyl-5-(beta-hydroxyethyl)thiazole monophosphate (THZ-P) and 2-methyl-4-amino-5-hydroxymethyl pyrimidine pyrophosphate (HMP-PP) to form thiamine monophosphate (TMP). The sequence is that of Thiamine-phosphate synthase from Campylobacter jejuni subsp. jejuni serotype O:6 (strain 81116 / NCTC 11828).